We begin with the raw amino-acid sequence, 195 residues long: Peptidyl-tRNA hydrolase (195 aa).

Tyr-18 is a tRNA binding site. Catalysis depends on His-23, which acts as the Proton acceptor. Residues Tyr-69, Asn-71, and Asn-117 each contribute to the tRNA site.

It belongs to the PTH family. Monomer.

The protein localises to the cytoplasm. It catalyses the reaction an N-acyl-L-alpha-aminoacyl-tRNA + H2O = an N-acyl-L-amino acid + a tRNA + H(+). Hydrolyzes ribosome-free peptidyl-tRNAs (with 1 or more amino acids incorporated), which drop off the ribosome during protein synthesis, or as a result of ribosome stalling. In terms of biological role, catalyzes the release of premature peptidyl moieties from peptidyl-tRNA molecules trapped in stalled 50S ribosomal subunits, and thus maintains levels of free tRNAs and 50S ribosomes. This chain is Peptidyl-tRNA hydrolase, found in Nitrosomonas eutropha (strain DSM 101675 / C91 / Nm57).